The sequence spans 683 residues: Methionine--tRNA ligase (683 aa).

The short motif at 15–25 (PYANGSIHLGH) is the 'HIGH' region element. Cys-146, Cys-149, Cys-159, and Cys-162 together coordinate Zn(2+). Positions 332-336 (KMSKS) match the 'KMSKS' region motif. Lys-335 is an ATP binding site. The region spanning 582-683 (DFAKVDLRIA…QGAQAGMRVM (102 aa)) is the tRNA-binding domain.

This sequence belongs to the class-I aminoacyl-tRNA synthetase family. MetG type 1 subfamily. In terms of assembly, homodimer. Requires Zn(2+) as cofactor.

It localises to the cytoplasm. The catalysed reaction is tRNA(Met) + L-methionine + ATP = L-methionyl-tRNA(Met) + AMP + diphosphate. Functionally, is required not only for elongation of protein synthesis but also for the initiation of all mRNA translation through initiator tRNA(fMet) aminoacylation. The chain is Methionine--tRNA ligase from Vibrio cholerae serotype O1 (strain ATCC 39541 / Classical Ogawa 395 / O395).